The primary structure comprises 348 residues: 4-hydroxy-2-oxovalerate aldolase 3 (348 aa).

Positions 8–260 (ITVHDMTLRD…ETGVDVWKIQ (253 aa)) constitute a Pyruvate carboxyltransferase domain. 16 to 17 (RD) contributes to the substrate binding site. Mn(2+) is bound at residue Asp17. His20 functions as the Proton acceptor in the catalytic mechanism. Positions 170 and 199 each coordinate substrate. 2 residues coordinate Mn(2+): His199 and His201. A substrate-binding site is contributed by Tyr290.

The protein belongs to the 4-hydroxy-2-oxovalerate aldolase family.

The enzyme catalyses (S)-4-hydroxy-2-oxopentanoate = acetaldehyde + pyruvate. In Burkholderia lata (strain ATCC 17760 / DSM 23089 / LMG 22485 / NCIMB 9086 / R18194 / 383), this protein is 4-hydroxy-2-oxovalerate aldolase 3.